Reading from the N-terminus, the 320-residue chain is Fe-S cluster assembly protein dre2 (320 aa).

The N-terminal SAM-like domain stretch occupies residues 1 to 130 (MAKQTLLLSP…KPDIEEMQAV (130 aa)). The interval 131–213 (PLRLGRKNDH…DNLLDDSELS (83 aa)) is linker. The disordered stretch occupies residues 141–166 (LAGAPSLEGSAAEHPFPPEVSEGKTA). Positions 222, 233, 236, and 238 each coordinate [2Fe-2S] cluster. The tract at residues 222-238 (CRPKAGKRRRACKDCTC) is fe-S binding site A. Residues Cys-283, Cys-286, Cys-294, and Cys-297 each coordinate [4Fe-4S] cluster. Short sequence motifs (cx2C motif) lie at residues 283–286 (CGNC) and 294–297 (CEGC). Residues 283–297 (CGNCSLGDAFRCEGC) are fe-S binding site B.

The protein belongs to the anamorsin family. As to quaternary structure, monomer. Interacts with tah18. Interacts with mia40. [2Fe-2S] cluster is required as a cofactor. It depends on [4Fe-4S] cluster as a cofactor.

It localises to the cytoplasm. It is found in the mitochondrion intermembrane space. Functionally, component of the cytosolic iron-sulfur (Fe-S) protein assembly (CIA) machinery required for the maturation of extramitochondrial Fe-S proteins. Part of an electron transfer chain functioning in an early step of cytosolic Fe-S biogenesis, facilitating the de novo assembly of a [4Fe-4S] cluster on the scaffold complex cfd1-nbp35. Electrons are transferred to dre2 from NADPH via the FAD- and FMN-containing protein tah18. Tah18-dre2 are also required for the assembly of the diferric tyrosyl radical cofactor of ribonucleotide reductase (RNR), probably by providing electrons for reduction during radical cofactor maturation in the catalytic small subunit rnr2. The protein is Fe-S cluster assembly protein dre2 of Neosartorya fischeri (strain ATCC 1020 / DSM 3700 / CBS 544.65 / FGSC A1164 / JCM 1740 / NRRL 181 / WB 181) (Aspergillus fischerianus).